The sequence spans 110 residues: Phosphoribosyl-ATP pyrophosphatase (110 aa).

The protein belongs to the PRA-PH family.

The protein localises to the cytoplasm. The enzyme catalyses 1-(5-phospho-beta-D-ribosyl)-ATP + H2O = 1-(5-phospho-beta-D-ribosyl)-5'-AMP + diphosphate + H(+). It participates in amino-acid biosynthesis; L-histidine biosynthesis; L-histidine from 5-phospho-alpha-D-ribose 1-diphosphate: step 2/9. The polypeptide is Phosphoribosyl-ATP pyrophosphatase (Pseudomonas fluorescens (strain SBW25)).